The following is a 25-amino-acid chain: Kunitz-type serine protease inhibitor 2 (25 aa).

In terms of domain architecture, BPTI/Kunitz inhibitor spans 6–25 (VCELPKEVGGPCRGHIIPRY).

It is found in the secreted. Its function is as follows. Inhibits bovine trypsin, human plasma kallikrein and human neutrophil elastase. In Rhipicephalus microplus (Cattle tick), this protein is Kunitz-type serine protease inhibitor 2.